The following is a 318-amino-acid chain: Ribosomal RNA small subunit methyltransferase H (318 aa).

S-adenosyl-L-methionine contacts are provided by residues 33 to 35, D53, F80, D101, and Q108; that span reads GGH.

This sequence belongs to the methyltransferase superfamily. RsmH family.

The protein resides in the cytoplasm. The enzyme catalyses cytidine(1402) in 16S rRNA + S-adenosyl-L-methionine = N(4)-methylcytidine(1402) in 16S rRNA + S-adenosyl-L-homocysteine + H(+). Functionally, specifically methylates the N4 position of cytidine in position 1402 (C1402) of 16S rRNA. The protein is Ribosomal RNA small subunit methyltransferase H of Symbiobacterium thermophilum (strain DSM 24528 / JCM 14929 / IAM 14863 / T).